A 127-amino-acid polypeptide reads, in one-letter code: Small ribosomal subunit protein eS8 (127 aa).

A disordered region spans residues 1-25 (MTIFQGKSGKKPTGGNLKQAKKKRR).

The protein belongs to the eukaryotic ribosomal protein eS8 family. In terms of assembly, part of the 30S ribosomal subunit.

The polypeptide is Small ribosomal subunit protein eS8 (Thermoplasma volcanium (strain ATCC 51530 / DSM 4299 / JCM 9571 / NBRC 15438 / GSS1)).